We begin with the raw amino-acid sequence, 325 residues long: Tagatose 1,6-diphosphate aldolase (325 aa).

The protein belongs to the aldolase LacD family.

The enzyme catalyses D-tagatofuranose 1,6-bisphosphate = D-glyceraldehyde 3-phosphate + dihydroxyacetone phosphate. It functions in the pathway carbohydrate metabolism; D-tagatose 6-phosphate degradation; D-glyceraldehyde 3-phosphate and glycerone phosphate from D-tagatose 6-phosphate: step 2/2. The sequence is that of Tagatose 1,6-diphosphate aldolase from Staphylococcus epidermidis (strain ATCC 12228 / FDA PCI 1200).